The primary structure comprises 124 residues: Fluoride-specific ion channel FluC (124 aa).

Helical transmembrane passes span 1–21 (MVPL…LRFA), 38–58 (TLAV…LFLI), 69–89 (GLMV…LDTV), and 99–119 (LALG…WAGL). Na(+) is bound by residues glycine 76 and threonine 79.

The protein belongs to the fluoride channel Fluc/FEX (TC 1.A.43) family.

The protein localises to the cell inner membrane. The catalysed reaction is fluoride(in) = fluoride(out). Its activity is regulated as follows. Na(+) is not transported, but it plays an essential structural role and its presence is essential for fluoride channel function. Fluoride-specific ion channel. Important for reducing fluoride concentration in the cell, thus reducing its toxicity. This chain is Fluoride-specific ion channel FluC, found in Pseudomonas fluorescens (strain Pf0-1).